The sequence spans 499 residues: Myocyte-specific enhancer factor 2A (499 aa).

One can recognise an MADS-box domain in the interval Arg-3–Tyr-57. Lys-4 is subject to N6-acetyllysine. Positions Ala-58–Glu-86 form a DNA-binding region, mef2-type. Lys-117 is subject to N6-acetyllysine. Low complexity predominate over residues Thr-173–Leu-185. Positions Thr-173–Lys-269 are disordered. Over residues Thr-210–Ser-233 the composition is skewed to polar residues. Residues Lys-248, Lys-253, Lys-269, and Lys-281 each carry the N6-acetyllysine modification. The interval Met-265–Gly-282 is required for interaction with MAPKs. Positions Thr-288–Leu-295 are beta domain. The span at Val-380–Ser-392 shows a compositional bias: low complexity. The disordered stretch occupies residues Val-380–Thr-499. Residue Lys-402 is modified to N6-acetyllysine; alternate. Lys-402 is covalently cross-linked (Glycyl lysine isopeptide (Lys-Gly) (interchain with G-Cter in SUMO); alternate). Over residues Gln-421 to Pro-436 the composition is skewed to pro residues. A compositionally biased stretch (low complexity) spans Ser-445–Asp-458. Composition is skewed to basic and acidic residues over residues Gly-459–Phe-469 and Asn-480–Thr-499.

In terms of assembly, binds DNA as a homo- or heterodimer. Post-translationally, sumoylation on Lys-402 is enhanced by PIAS1 and represses transcriptional activity. Has no effect on nuclear location nor on DNA binding. Sumoylated by SUMO1 and, to a lesser extent by SUMO2 and SUMO3. Acetylation on Lys-402 activates transcriptional activity. Expressed in both embryonic and adult tissues with high expression in heart and skeletal muscle. Also expressed in gut, lung and brain of 15 dpc embryos and adults.

The protein localises to the nucleus. Its function is as follows. Transcriptional activator which binds specifically to the MEF2 element, 5'-YTA[AT](4)TAR-3', found in numerous muscle-specific genes. Mediates cellular functions in skeletal and cardiac muscle development,. This chain is Myocyte-specific enhancer factor 2A (MEF2A), found in Gallus gallus (Chicken).